A 95-amino-acid polypeptide reads, in one-letter code: Co-chaperonin GroES (95 aa).

This sequence belongs to the GroES chaperonin family. In terms of assembly, heptamer of 7 subunits arranged in a ring. Interacts with the chaperonin GroEL.

The protein localises to the cytoplasm. Functionally, together with the chaperonin GroEL, plays an essential role in assisting protein folding. The GroEL-GroES system forms a nano-cage that allows encapsulation of the non-native substrate proteins and provides a physical environment optimized to promote and accelerate protein folding. GroES binds to the apical surface of the GroEL ring, thereby capping the opening of the GroEL channel. In Bordetella bronchiseptica (strain ATCC BAA-588 / NCTC 13252 / RB50) (Alcaligenes bronchisepticus), this protein is Co-chaperonin GroES.